Here is a 316-residue protein sequence, read N- to C-terminus: Ester hydrolase C11orf54 homolog (316 aa).

Zn(2+)-binding residues include His-267, His-269, and His-279.

As to quaternary structure, monomer. The cofactor is Zn(2+).

It is found in the nucleus. The protein resides in the cytoplasm. Its function is as follows. Exhibits ester hydrolase activity on the substrate p-nitrophenyl acetate, in vitro. May regulate DNA damage and repair by regulating HIF1A degradation via chaperone-mediated autophagy (CMA). The protein is Ester hydrolase C11orf54 homolog of Xenopus laevis (African clawed frog).